The chain runs to 44 residues: Antimicrobial peptide 2 (44 aa).

In terms of processing, disulfide bonds. In terms of tissue distribution, expressed in flowers but not in leaves, seeds or roots (at protein level).

In terms of biological role, antimicrobial peptide. Active against fungal species B.cinerea (IC(50)=5.2 uM), A.niger (IC(50)=2.6 uM) and B.sorokinina (IC(50)=5.2 uM) but not against F.oxysporum, F.graminearum and P.debaryanum at concentrations below 10 uM. Inhibits growth of P.infestans at concentration between 1.3 uM and 5.2 uM. Active against bacterial species P.syringae, B.subtilis, X.campestris and C.michiganense. This Taraxacum officinale (Common dandelion) protein is Antimicrobial peptide 2.